Here is an 855-residue protein sequence, read N- to C-terminus: MTDLSQHTPMMQQYFKLKHQHPDQLMFYRMGDFYELFYEDAKKAAKLLDITLTARGQSGGKAIPMAGIPFHSAEGYLAKLVKLGESVAICEQIGDPATSKGPVERQVVRIITPGTVSDEALLDERRDNLLAAILGDERLFGLAVLDITSGRFSVQEIKGWETLLAELERLNPAELLIPDDWPQGLPSEKRRGVRRRAPWDFDRDSAHKSLCQQFGTQDLKGFGCQNLTLAIGAAGCLLAYAKETQRTALPHLRSLRHDRLDDTVILDGASRRNLELDINLSGGRENTLQSVVDRCQTAMASRLMSRWLNRPLRDRAVLEARQESIACLLERYRFENLQPQLKEIGDLERILARIGLRNARPRDLARLRDALAALPDLQNAMTELEAPHLQALATTIGTYPELAELLAKAIIDNPPAVIRDGGVIKTGYDAELDELQALSENAGQFLMDLEAREKARTGLPNLKVGYNRIHGYFIELPRVQAEQAPADYIRRQTLKGAERFITPELKAFEDKALSAQSRALAREKALYEELLERLIGHLAPLQDSASALAELDVLANLAERALNLDLNRPRFVEHTCLHIEQGRHPVVEQVLETPFVANDLALDADTRMLVITGPNMGGKSTYMRQTALIVLLAHIGSFVPAARCELSLVDRIFTRIGSSDDLAGGRSTFMVEMSETANILHNATDKSLVLMDEVGRGTSTFDGLSLAWAAAEDLARTRAFTLFATHYFELTVLPESQPAVANVHLNATEHNERIVFLHHVLPGPASQSYGLAVAQLAGVPAPVIQRAREHLKRLETTSLPHEMPSQQSGKPASPMQSDLFASLPHPVIDELSRINPDDISPRQALDLLYAWKMRV.

613-620 (GPNMGGKS) is an ATP binding site. A disordered region spans residues 796-816 (TTSLPHEMPSQQSGKPASPMQ).

This sequence belongs to the DNA mismatch repair MutS family.

Its function is as follows. This protein is involved in the repair of mismatches in DNA. It is possible that it carries out the mismatch recognition step. This protein has a weak ATPase activity. The sequence is that of DNA mismatch repair protein MutS from Pseudomonas aeruginosa (strain LESB58).